The following is a 318-amino-acid chain: L-lactate dehydrogenase (318 aa).

NAD(+) is bound by residues V18, D39, K44, Y69, and 83 to 84 (GA). 2 residues coordinate substrate: Q86 and R92. NAD(+)-binding positions include S105, 122 to 124 (VSN), and S147. 124 to 127 (NPVD) is a binding site for substrate. 152-155 (DTSR) lines the substrate pocket. The active-site Proton acceptor is the H179. Y225 carries the post-translational modification Phosphotyrosine. Position 234 (T234) interacts with substrate.

Belongs to the LDH/MDH superfamily. LDH family. In terms of assembly, homotetramer.

It localises to the cytoplasm. It carries out the reaction (S)-lactate + NAD(+) = pyruvate + NADH + H(+). The protein operates within fermentation; pyruvate fermentation to lactate; (S)-lactate from pyruvate: step 1/1. In terms of biological role, catalyzes the conversion of lactate to pyruvate. The polypeptide is L-lactate dehydrogenase (Clostridium botulinum (strain Okra / Type B1)).